The following is a 224-amino-acid chain: MSIRSWPREERPRERLIQRGPQALSDAELLAIFLRTGRRGQSAVELARELLAAFSGLRGLLEADRETFAARPGLGDAKYAQMQAALEIARRHLGEQLQRGPTLSSPAQTRTYLAALLRDHPSEVFGGLFLDNRHRVIGFEELFRGTINGASVYPRELVRRALAHNAAAVIVAHNHPSGITEPSAADEALTHRLREALGLVDVRLLDHFVVGDGEPVSLAERGVL.

Residues 102–224 (TLSSPAQTRT…PVSLAERGVL (123 aa)) enclose the MPN domain. Positions 173, 175, and 186 each coordinate Zn(2+). Residues 173 to 186 (HNHPSGITEPSAAD) carry the JAMM motif motif.

This sequence belongs to the UPF0758 family.

This is UPF0758 protein Hhal_2301 from Halorhodospira halophila (strain DSM 244 / SL1) (Ectothiorhodospira halophila (strain DSM 244 / SL1)).